The sequence spans 266 residues: 15-hydroxyprostaglandin dehydrogenase [NAD(+)] (266 aa).

Residues G12–A20, D36–W37, C63–V65, and N91 contribute to the NAD(+) site. Residues S138 and Q148 each coordinate substrate. Y151 functions as the Proton acceptor in the catalytic mechanism. NAD(+) contacts are provided by residues Y151 to K155 and V186 to T188.

It belongs to the short-chain dehydrogenases/reductases (SDR) family. As to quaternary structure, homodimer.

The protein resides in the cytoplasm. The enzyme catalyses prostaglandin E2 + NAD(+) = 15-oxoprostaglandin E2 + NADH + H(+). It catalyses the reaction (15S)-hydroxy-(5Z,8Z,11Z,13E)-eicosatetraenoate + NAD(+) = 15-oxo-(5Z,8Z,11Z,13E)-eicosatetraenoate + NADH + H(+). The catalysed reaction is (11R)-hydroxy-(5Z,8Z,12E,14Z)-eicosatetraenoate + NAD(+) = 11-oxo-(5Z,8Z,12E,14Z)-eicosatetraenoate + NADH + H(+). It carries out the reaction lipoxin A4 + NAD(+) = 15-oxo-(5S,6R)-dihydroxy-(7E,9E,11Z,13E)-eicosatetraenoate + NADH + H(+). The enzyme catalyses 15-oxo-(5S,6R)-dihydroxy-(7E,9E,11Z)-eicosatrienoate + NADH + H(+) = (5S,6R,15S)-trihydroxy-(7E,9E,11Z)-eicosatrienoate + NAD(+). It catalyses the reaction prostaglandin A1 + NAD(+) = 15-oxo-prostaglandin A1 + NADH + H(+). The catalysed reaction is prostaglandin E1 + NAD(+) = 15-oxoprostaglandin E1 + NADH + H(+). It carries out the reaction 14-hydroxy-(4Z,7Z,10Z,12E,16Z,19Z)-docosahexaenoate + NAD(+) = 14-oxo-(4Z,7Z,10Z,12E,16Z,19Z)-docosahexaenoate + NADH + H(+). The enzyme catalyses resolvin E1 + NAD(+) = 18-oxo-resolvin E1 + NADH + H(+). It catalyses the reaction resolvin D1 + NAD(+) = 8-oxoresolvin D1 + NADH + H(+). The catalysed reaction is resolvin D1 + NAD(+) = 17-oxoresolvin D1 + NADH + H(+). It carries out the reaction resolvin D2 + NAD(+) = 7-oxoresolvin D2 + NADH + H(+). The enzyme catalyses resolvin D2 + NAD(+) = 16-oxoresolvin D2 + NADH + H(+). Functionally, catalyzes the NAD-dependent dehydrogenation (oxidation) of a broad array of hydroxylated polyunsaturated fatty acids (mainly eicosanoids and docosanoids, including prostaglandins, lipoxins and resolvins), yielding their corresponding keto (oxo) metabolites. Decreases the levels of the pro-proliferative prostaglandins such as prostaglandin E2 (whose activity is increased in cancer because of an increase in the expression of cyclooxygenase 2) and generates oxo-fatty acid products that can profoundly influence cell function by abrogating pro-inflammatory cytokine expression. Converts resolvins E1, D1 and D2 to their oxo products, which represents a mode of resolvin inactivation. Resolvin E1 plays important roles during the resolution phase of acute inflammation, while resolvins D1 and D2 have a unique role in obesity-induced adipose inflammation. The chain is 15-hydroxyprostaglandin dehydrogenase [NAD(+)] (HPGD) from Macaca fascicularis (Crab-eating macaque).